A 380-amino-acid chain; its full sequence is Alcohol dehydrogenase 1 (380 aa).

Zn(2+) contacts are provided by C48, T50, H70, C100, C103, C106, C114, and C178. T50 and H70 together coordinate an alcohol. NAD(+) is bound at residue T50. Residues 203 to 208, D227, R232, T273, V296, 296 to 298, and R373 each bind NAD(+); these read GLGAVG and VGV.

This sequence belongs to the zinc-containing alcohol dehydrogenase family. As to quaternary structure, homodimer. Requires Zn(2+) as cofactor.

The protein resides in the cytoplasm. It carries out the reaction a primary alcohol + NAD(+) = an aldehyde + NADH + H(+). The catalysed reaction is a secondary alcohol + NAD(+) = a ketone + NADH + H(+). This chain is Alcohol dehydrogenase 1, found in Pisum sativum (Garden pea).